A 192-amino-acid polypeptide reads, in one-letter code: Protein GrpE (192 aa).

Residues 1-43 form a disordered region; that stretch reads MQENKQPSEIQGELPQPPDGESVPPQPTNEQAPPDTDTMPRIE.

This sequence belongs to the GrpE family. In terms of assembly, homodimer.

Its subcellular location is the cytoplasm. Participates actively in the response to hyperosmotic and heat shock by preventing the aggregation of stress-denatured proteins, in association with DnaK and GrpE. It is the nucleotide exchange factor for DnaK and may function as a thermosensor. Unfolded proteins bind initially to DnaJ; upon interaction with the DnaJ-bound protein, DnaK hydrolyzes its bound ATP, resulting in the formation of a stable complex. GrpE releases ADP from DnaK; ATP binding to DnaK triggers the release of the substrate protein, thus completing the reaction cycle. Several rounds of ATP-dependent interactions between DnaJ, DnaK and GrpE are required for fully efficient folding. The polypeptide is Protein GrpE (Aromatoleum aromaticum (strain DSM 19018 / LMG 30748 / EbN1) (Azoarcus sp. (strain EbN1))).